Consider the following 90-residue polypeptide: MPKRVLTGRVVSDKMDKTVTVLVERRVMHPLYKKFIRRSKKYAAHDEGNVCAMGDLVRIEECPPISKRKAWLVTARNGEPVGAAAEAQGA.

Belongs to the universal ribosomal protein uS17 family. As to quaternary structure, part of the 30S ribosomal subunit.

One of the primary rRNA binding proteins, it binds specifically to the 5'-end of 16S ribosomal RNA. This is Small ribosomal subunit protein uS17 from Acidiphilium cryptum (strain JF-5).